The following is a 304-amino-acid chain: Elongation factor Ts (304 aa).

The involved in Mg(2+) ion dislocation from EF-Tu stretch occupies residues 80-83; it reads TDFV.

The protein belongs to the EF-Ts family.

Its subcellular location is the cytoplasm. In terms of biological role, associates with the EF-Tu.GDP complex and induces the exchange of GDP to GTP. It remains bound to the aminoacyl-tRNA.EF-Tu.GTP complex up to the GTP hydrolysis stage on the ribosome. This Clostridium tetani (strain Massachusetts / E88) protein is Elongation factor Ts.